The sequence spans 97 residues: U6-theraphotoxin-Hhn1a 2 (97 aa).

An N-terminal signal peptide occupies residues 1-33; that stretch reads MLIKQFSRRPKNMKVQILLAFAALFVLAVGSYA. Residues 34–61 constitute a propeptide that is removed on maturation; that stretch reads SESKKLDLRDASFSAMFSADYQLNPQER. 3 cysteine pairs are disulfide-bonded: Cys63–Cys77, Cys70–Cys82, and Cys76–Cys89.

It belongs to the neurotoxin 10 (Hwtx-1) family. 12 (Hntx-12) subfamily. Expressed by the venom gland.

The protein localises to the secreted. Functionally, ion channel inhibitor. The chain is U6-theraphotoxin-Hhn1a 2 from Cyriopagopus hainanus (Chinese bird spider).